The chain runs to 213 residues: Na(+)-translocating NADH-quinone reductase subunit D (213 aa).

Helical transmembrane passes span 21-41 (PLIAILGICSALAVTTTVNTA), 42-62 (ITMGLAVSFVTGCSSFFVSLL), 69-86 (SVRMITQLIIISLFVIVI), 101-121 (LSVFVGLIITNCIVMGRAESL), 131-151 (FLDGLASGLGYGWVLVTVSIV), and 183-203 (FGLMVLAPSAFFLLGIMIWGV).

Belongs to the NqrDE/RnfAE family. In terms of assembly, composed of six subunits; NqrA, NqrB, NqrC, NqrD, NqrE and NqrF.

It is found in the cell inner membrane. The enzyme catalyses a ubiquinone + n Na(+)(in) + NADH + H(+) = a ubiquinol + n Na(+)(out) + NAD(+). In terms of biological role, NQR complex catalyzes the reduction of ubiquinone-1 to ubiquinol by two successive reactions, coupled with the transport of Na(+) ions from the cytoplasm to the periplasm. NqrA to NqrE are probably involved in the second step, the conversion of ubisemiquinone to ubiquinol. The polypeptide is Na(+)-translocating NADH-quinone reductase subunit D (Chlamydia caviae (strain ATCC VR-813 / DSM 19441 / 03DC25 / GPIC) (Chlamydophila caviae)).